The chain runs to 152 residues: Putative pre-16S rRNA nuclease (152 aa).

This sequence belongs to the YqgF nuclease family.

It is found in the cytoplasm. Its function is as follows. Could be a nuclease involved in processing of the 5'-end of pre-16S rRNA. This is Putative pre-16S rRNA nuclease from Sphingopyxis alaskensis (strain DSM 13593 / LMG 18877 / RB2256) (Sphingomonas alaskensis).